Consider the following 560-residue polypeptide: Oxygen-dependent choline dehydrogenase (560 aa).

Residue 6–35 (DYIIVGAGSAGCVLADRLSESGDHSVLLLE) participates in FAD binding. The active-site Proton acceptor is the His470.

This sequence belongs to the GMC oxidoreductase family. It depends on FAD as a cofactor.

It catalyses the reaction choline + A = betaine aldehyde + AH2. It carries out the reaction betaine aldehyde + NAD(+) + H2O = glycine betaine + NADH + 2 H(+). The protein operates within amine and polyamine biosynthesis; betaine biosynthesis via choline pathway; betaine aldehyde from choline (cytochrome c reductase route): step 1/1. Involved in the biosynthesis of the osmoprotectant glycine betaine. Catalyzes the oxidation of choline to betaine aldehyde and betaine aldehyde to glycine betaine at the same rate. The chain is Oxygen-dependent choline dehydrogenase from Vibrio vulnificus (strain YJ016).